The sequence spans 497 residues: Nuclear pore complex protein npp-16 (497 aa).

3 disordered regions span residues 76-95, 210-308, and 359-379; these read VPRR…APRK, TKKS…SAPK, and MENQ…GEYV. 2 stretches are compositionally biased toward basic and acidic residues: residues 231 to 240 and 250 to 260; these read KDGDKPKETP and KPAEPSEEPKA. Residues 390-497 are ranBD1; that stretch reads EPDAVLSSKV…FTDKILEVAV (108 aa).

Interacts with importin beta imb-1. Interacts with DNA-directed RNA polymerase III subunit rpc-1. Interacts with TATA-box-binding protein tbp-1. Interacts with GTF3C5 homolog tftc-5. Interacts with GTF3C3 homolog tftc-3.

It is found in the nucleus. The protein localises to the nuclear pore complex. It localises to the nucleus membrane. Functionally, component of the nuclear pore complex. Plays a direct role in nuclear protein import. Required for anoxia-induced prophase arrest; may function in concert with cdk-1 to arrest prophase blastomeres in response to anoxia. The sequence is that of Nuclear pore complex protein npp-16 from Caenorhabditis elegans.